The chain runs to 209 residues: Mitochondrial import inner membrane translocase subunit Tim23 (209 aa).

The next 3 helical transmembrane spans lie at 73 to 93, 125 to 145, and 181 to 197; these read FELA…FGAL, ALWA…GVII, and GLAG…YNNW.

This sequence belongs to the Tim17/Tim22/Tim23 family. In terms of assembly, component of the TIM23 complex at least composed of TIMM23, TIMM17 (TIMM17A or TIMM17B) and TIMM50; within this complex, directly interacts with TIMM50. The complex interacts with the TIMM44 component of the PAM complex and with DNAJC15. Upon mitochondrial depolarization, interacts with PINK1; the interaction is required for PINK1 accumulation at the outer mitochondrial membrane, kinase activation by autophosphorylation and PRKN recruitement to mitochondria.

The protein localises to the mitochondrion inner membrane. Its function is as follows. Essential component of the TIM23 complex, a complex that mediates the translocation of transit peptide-containing proteins across the mitochondrial inner membrane. Has a role in the activation of stress-induced mitophagy by protecting PINK1 from OMA1-mediated degradation and facilitating its accumulation at the outer mitochondrial membrane in response to depolarization. This chain is Mitochondrial import inner membrane translocase subunit Tim23 (Timm23), found in Rattus norvegicus (Rat).